The primary structure comprises 481 residues: Glutamate--tRNA ligase (481 aa).

The 'HIGH' region motif lies at 9–19; the sequence is PSPTGNLHIGT. The short motif at 247-251 is the 'KMSKS' region element; that stretch reads KLSKR. Lysine 250 provides a ligand contact to ATP.

This sequence belongs to the class-I aminoacyl-tRNA synthetase family. Glutamate--tRNA ligase type 1 subfamily. As to quaternary structure, monomer.

The protein resides in the cytoplasm. The enzyme catalyses tRNA(Glu) + L-glutamate + ATP = L-glutamyl-tRNA(Glu) + AMP + diphosphate. Functionally, catalyzes the attachment of glutamate to tRNA(Glu) in a two-step reaction: glutamate is first activated by ATP to form Glu-AMP and then transferred to the acceptor end of tRNA(Glu). The chain is Glutamate--tRNA ligase from Nostoc punctiforme (strain ATCC 29133 / PCC 73102).